A 137-amino-acid polypeptide reads, in one-letter code: Large ribosomal subunit protein uL16 (137 aa).

This sequence belongs to the universal ribosomal protein uL16 family. In terms of assembly, part of the 50S ribosomal subunit.

Functionally, binds 23S rRNA and is also seen to make contacts with the A and possibly P site tRNAs. This Alkalilimnicola ehrlichii (strain ATCC BAA-1101 / DSM 17681 / MLHE-1) protein is Large ribosomal subunit protein uL16.